The following is a 228-amino-acid chain: L-ribulose-5-phosphate 4-epimerase UlaF (228 aa).

Residues G26–N27, S43–G44, and S72–S73 contribute to the substrate site. Residues D74, H93, and H95 each coordinate Zn(2+). D118 (proton donor/acceptor) is an active-site residue. Position 167 (H167) interacts with Zn(2+). Y225 functions as the Proton donor/acceptor in the catalytic mechanism.

The protein belongs to the aldolase class II family. AraD/FucA subfamily. Zn(2+) is required as a cofactor.

It carries out the reaction L-ribulose 5-phosphate = D-xylulose 5-phosphate. Its pathway is cofactor degradation; L-ascorbate degradation; D-xylulose 5-phosphate from L-ascorbate: step 4/4. Its function is as follows. Catalyzes the isomerization of L-ribulose 5-phosphate to D-xylulose 5-phosphate. Is involved in the anaerobic L-ascorbate utilization. The chain is L-ribulose-5-phosphate 4-epimerase UlaF from Shigella sonnei (strain Ss046).